The sequence spans 552 residues: Undecaprenyl phosphate-alpha-4-amino-4-deoxy-L-arabinose arabinosyl transferase (552 aa).

11 helical membrane passes run 4–24 (IAGW…PLPG), 81–101 (FAVR…VFWL), 113–133 (VVAV…SYAV), 176–196 (FMTK…PWVI), 207–227 (FGPL…LAIA), 255–275 (APFW…LGLL), 289–309 (QGGD…FSIA), 313–333 (LPTY…GYVQ), 351–371 (LLVG…WGIT), 384–404 (VILG…SLYH), and 411–431 (WSAA…PQQV).

The protein belongs to the glycosyltransferase 83 family.

Its subcellular location is the cell inner membrane. It catalyses the reaction 4-amino-4-deoxy-alpha-L-arabinopyranosyl di-trans,octa-cis-undecaprenyl phosphate + lipid IVA = lipid IIA + di-trans,octa-cis-undecaprenyl phosphate.. It participates in lipopolysaccharide metabolism; 4-amino-4-deoxy-beta-L-arabinose-lipid A biosynthesis. Functionally, catalyzes the transfer of the L-Ara4N moiety of the glycolipid undecaprenyl phosphate-alpha-L-Ara4N to lipid A. The modified arabinose is attached to lipid A and is required for resistance to polymyxin and cationic antimicrobial peptides. This Edwardsiella ictaluri (strain 93-146) protein is Undecaprenyl phosphate-alpha-4-amino-4-deoxy-L-arabinose arabinosyl transferase.